Here is a 241-residue protein sequence, read N- to C-terminus: Carboxy-S-adenosyl-L-methionine synthase (241 aa).

Residues Tyr38, 63 to 65, 88 to 89, 116 to 117, Asn131, and Arg198 contribute to the S-adenosyl-L-methionine site; these read GCS, DN, and DI.

This sequence belongs to the class I-like SAM-binding methyltransferase superfamily. Cx-SAM synthase family. In terms of assembly, homodimer.

The enzyme catalyses prephenate + S-adenosyl-L-methionine = carboxy-S-adenosyl-L-methionine + 3-phenylpyruvate + H2O. Functionally, catalyzes the conversion of S-adenosyl-L-methionine (SAM) to carboxy-S-adenosyl-L-methionine (Cx-SAM). The chain is Carboxy-S-adenosyl-L-methionine synthase from Haemophilus influenzae (strain PittGG).